The following is a 305-amino-acid chain: Glycine--tRNA ligase alpha subunit (305 aa).

This sequence belongs to the class-II aminoacyl-tRNA synthetase family. Tetramer of two alpha and two beta subunits.

Its subcellular location is the cytoplasm. It carries out the reaction tRNA(Gly) + glycine + ATP = glycyl-tRNA(Gly) + AMP + diphosphate. The protein is Glycine--tRNA ligase alpha subunit (glyQ) of Vibrio cholerae serotype O1 (strain ATCC 39315 / El Tor Inaba N16961).